The following is a 203-amino-acid chain: tRNA (pseudouridine(54)-N(1))-methyltransferase (203 aa).

S-adenosyl-L-methionine contacts are provided by Leu-135 and Gly-156.

The protein belongs to the methyltransferase superfamily. TrmY family. In terms of assembly, homodimer.

It localises to the cytoplasm. It catalyses the reaction pseudouridine(54) in tRNA + S-adenosyl-L-methionine = N(1)-methylpseudouridine(54) in tRNA + S-adenosyl-L-homocysteine + H(+). In terms of biological role, specifically catalyzes the N1-methylation of pseudouridine at position 54 (Psi54) in tRNAs. The protein is tRNA (pseudouridine(54)-N(1))-methyltransferase of Thermococcus onnurineus (strain NA1).